A 215-amino-acid chain; its full sequence is Ras-like GTP-binding protein RHO1 (215 aa).

The GTP site is built by Ala-30, Val-31, Gly-32, Lys-33, Thr-34, and Cys-35. Thr-34 contacts Mg(2+). 2 consecutive short sequence motifs (switch) follow at residues 43-54 (GEIPTAYVPTVF) and 74-93 (DTAG…ADSD). Thr-52 is a Mg(2+) binding site. GTP contacts are provided by Asp-135 and Ser-166. The segment at 194–215 (VTTQAKSQESTQQKKKSKCLLQ) is disordered. A compositionally biased stretch (low complexity) spans 195–204 (TTQAKSQEST). Positions 206–215 (QKKKSKCLLQ) are enriched in basic residues. The residue at position 212 (Cys-212) is a Cysteine methyl ester. Cys-212 is lipidated: S-geranylgeranyl cysteine. Positions 213 to 215 (LLQ) are cleaved as a propeptide — removed in mature form.

The protein belongs to the small GTPase superfamily. Rho family. In terms of assembly, interacts (GTP-bound form) with formin1 (via GBD/FH3 domain); the interaction activates formin1. Interacts (GTP-bound form) with profilin1. Interacts (GDP-bound form and when prenylated) with RhoGDI. Requires Mg(2+) as cofactor.

It is found in the cell membrane. The protein resides in the cytoplasm. Its subcellular location is the cytoskeleton. It localises to the cell projection. The protein localises to the phagocytic cup. It is found in the cytoplasmic vesicle. The protein resides in the phagosome. The catalysed reaction is GTP + H2O = GDP + phosphate + H(+). Its activity is regulated as follows. Regulated by guanine nucleotide exchange factors (GEFs) which promote the exchange of bound GDP for free GTP, GTPase activating proteins (GAPs) which increase the GTP hydrolysis activity and GDP dissociation inhibitors which inhibit the dissociation of the nucleotide from the GTPase. Functionally, small GTPase which cycles between active GTP-bound and inactive GDP-bound states. Involved in actin cytoskeleton remodeling. Regulates phagocytosis by modulating actin cytoskeleton dynamics through the recruitment of formin1 and profilin1 to the phagocytosis nucleation site. The polypeptide is Ras-like GTP-binding protein RHO1 (Entamoeba histolytica (strain ATCC 30459 / HM-1:IMSS / ABRM)).